The following is a 924-amino-acid chain: DNA repair and recombination protein RDH54 (924 aa).

A compositionally biased stretch (basic and acidic residues) spans 1-10 (MQIPKYENKP). Disordered regions lie at residues 1–21 (MQIPKYENKPFKPPRRVGSNK) and 155–182 (EALSQNMGNPNPPTTSTTETVPSTKNDG). A compositionally biased stretch (low complexity) spans 168-178 (TTSTTETVPST). Positions 299–487 (LENDSDISGC…FTIIDFINPG (189 aa)) constitute a Helicase ATP-binding domain. 346–353 (IPLTGLCK) lines the ATP pocket. The DEGH box signature appears at 472–475 (NDLN). Residue Lys615 forms a Glycyl lysine isopeptide (Lys-Gly) (interchain with G-Cter in ubiquitin) linkage. Residues 631–790 (KLRVLMTLLE…DSEMRNKESS (160 aa)) form the Helicase C-terminal domain.

This sequence belongs to the SNF2/RAD54 helicase family. In terms of assembly, interacts with RAD51 and DMC1.

The protein localises to the nucleus. The catalysed reaction is ATP + H2O = ADP + phosphate + H(+). Functionally, involved in the recombinational repair of double-strand breaks (DSB) in DNA during mitosis and meiosis. Has DNA dependent ATPase activity. Promotes D-loop (displacement loop) formation with RAD51 recombinase. Modifies the topology of double-stranded DNA during the D-loop reaction to facilitate the invasion of the homologous duplex molecule by the initiating single-stranded DNA substrate. Required for adaptation from G2/M checkpoint arrest induced by a double strand break, by participating in monitoring the extent of single-stranded DNA produced by resection of DNA ends. This role is distinct from its roles in recombination. Promotes colocalization of RAD51 and DMC1 during meiotic recombination. Involved in crossover interference. This Saccharomyces cerevisiae (strain AWRI1631) (Baker's yeast) protein is DNA repair and recombination protein RDH54 (RDH54).